The following is a 114-amino-acid chain: Nucleoid-associated protein Clos_2855 (114 aa).

This sequence belongs to the YbaB/EbfC family. As to quaternary structure, homodimer.

It localises to the cytoplasm. It is found in the nucleoid. Its function is as follows. Binds to DNA and alters its conformation. May be involved in regulation of gene expression, nucleoid organization and DNA protection. The sequence is that of Nucleoid-associated protein Clos_2855 from Alkaliphilus oremlandii (strain OhILAs) (Clostridium oremlandii (strain OhILAs)).